We begin with the raw amino-acid sequence, 337 residues long: Adenosine deaminase-like protein (337 aa).

Zn(2+)-binding residues include histidine 14 and histidine 16. N(6)-methyl-AMP-binding positions include histidine 16, asparagine 18, histidine 66, 98–101 (TTPK), and glycine 171. Histidine 198 is a binding site for Zn(2+). Residues glutamate 201, aspartate 276, and aspartate 277 each contribute to the N(6)-methyl-AMP site. Glutamate 201 acts as the Proton donor in catalysis. A Zn(2+)-binding site is contributed by aspartate 276.

Belongs to the metallo-dependent hydrolases superfamily. Adenosine and AMP deaminases family. Monomer. Requires Zn(2+) as cofactor.

It catalyses the reaction N(6)-methyl-AMP + H2O + H(+) = IMP + methylamine. In terms of biological role, catalyzes the hydrolysis of the free cytosolic methylated adenosine nucleotide N(6)-methyl-AMP (N6-mAMP) to produce inositol monophosphate (IMP) and methylamine. Is required for the catabolism of cytosolic N6-mAMP, which is derived from the degradation of mRNA containing N6-methylated adenine (m6A). In Drosophila melanogaster (Fruit fly), this protein is Adenosine deaminase-like protein (Ada).